Consider the following 195-residue polypeptide: ATP-dependent Clp protease proteolytic subunit (195 aa).

The active-site Nucleophile is S97. The active site involves H122.

It belongs to the peptidase S14 family. In terms of assembly, fourteen ClpP subunits assemble into 2 heptameric rings which stack back to back to give a disk-like structure with a central cavity, resembling the structure of eukaryotic proteasomes.

It is found in the cytoplasm. It catalyses the reaction Hydrolysis of proteins to small peptides in the presence of ATP and magnesium. alpha-casein is the usual test substrate. In the absence of ATP, only oligopeptides shorter than five residues are hydrolyzed (such as succinyl-Leu-Tyr-|-NHMec, and Leu-Tyr-Leu-|-Tyr-Trp, in which cleavage of the -Tyr-|-Leu- and -Tyr-|-Trp bonds also occurs).. Functionally, cleaves peptides in various proteins in a process that requires ATP hydrolysis. Has a chymotrypsin-like activity. Plays a major role in the degradation of misfolded proteins. The sequence is that of ATP-dependent Clp protease proteolytic subunit from Campylobacter hominis (strain ATCC BAA-381 / DSM 21671 / CCUG 45161 / LMG 19568 / NCTC 13146 / CH001A).